A 330-amino-acid chain; its full sequence is Lipoyl synthase (330 aa).

7 residues coordinate [4Fe-4S] cluster: Cys77, Cys82, Cys88, Cys103, Cys107, Cys110, and Ser317. The region spanning 89–306 (FNHGTATFMI…RSEAERMGFE (218 aa)) is the Radical SAM core domain.

Belongs to the radical SAM superfamily. Lipoyl synthase family. It depends on [4Fe-4S] cluster as a cofactor.

The protein resides in the cytoplasm. It carries out the reaction [[Fe-S] cluster scaffold protein carrying a second [4Fe-4S](2+) cluster] + N(6)-octanoyl-L-lysyl-[protein] + 2 oxidized [2Fe-2S]-[ferredoxin] + 2 S-adenosyl-L-methionine + 4 H(+) = [[Fe-S] cluster scaffold protein] + N(6)-[(R)-dihydrolipoyl]-L-lysyl-[protein] + 4 Fe(3+) + 2 hydrogen sulfide + 2 5'-deoxyadenosine + 2 L-methionine + 2 reduced [2Fe-2S]-[ferredoxin]. Its pathway is protein modification; protein lipoylation via endogenous pathway; protein N(6)-(lipoyl)lysine from octanoyl-[acyl-carrier-protein]: step 2/2. Functionally, catalyzes the radical-mediated insertion of two sulfur atoms into the C-6 and C-8 positions of the octanoyl moiety bound to the lipoyl domains of lipoate-dependent enzymes, thereby converting the octanoylated domains into lipoylated derivatives. The polypeptide is Lipoyl synthase (Actinobacillus pleuropneumoniae serotype 3 (strain JL03)).